A 327-amino-acid chain; its full sequence is uncharacterized protein (327 aa).

Positions 32-105 constitute an S4 RNA-binding domain; it reads VRLDKWLAEQ…IPLDILYEDE (74 aa). Residue Asp-156 is part of the active site.

The protein belongs to the pseudouridine synthase RluA family.

The enzyme catalyses a uridine in RNA = a pseudouridine in RNA. This is an uncharacterized protein from Synechocystis sp. (strain ATCC 27184 / PCC 6803 / Kazusa).